A 609-amino-acid chain; its full sequence is Sodium- and chloride-dependent GABA transporter 2 (609 aa).

Positions 1-13 are enriched in polar residues; it reads MDSRASGTASNGE. The segment at 1–23 is disordered; that stretch reads MDSRASGTASNGETKPVYPVMEK. The Cytoplasmic portion of the chain corresponds to 1–40; it reads MDSRASGTASNGETKPVYPVMEKEEEEGTLERGHWNNKME. The next 3 helical transmembrane spans lie at 41-61, 68-88, and 121-141; these read FVLS…FPYL, GAFF…VFLL, and IVIL…FYLF. The Extracellular portion of the chain corresponds to 142-206; sequence SSFTIDLPWG…GIQHLGALRW (65 aa). Cys-153 and Cys-162 are disulfide-bonded. N-linked (GlcNAc...) asparagine glycans are attached at residues Asn-169 and Asn-173. The next 2 membrane-spanning stretches (helical) occupy residues 207 to 227 and 233 to 253; these read ELAL…WKGV and VVYF…IRGV. An N-linked (GlcNAc...) asparagine glycan is attached at Asn-269. Transmembrane regions (helical) follow at residues 282 to 302, 319 to 339, 366 to 386, 418 to 438, 453 to 473, 490 to 510, and 528 to 548; these read AGTQ…ALGS, FLNS…LGFM, VVML…VVLL, VLIL…LTEG, GMCL…VYGA, PLIK…TFLF, and WWGD…IPAW. At 549 to 609 the chain is on the cytoplasmic side; sequence SLYRLGTLKG…LRLTELESHC (61 aa). The residue at position 594 (Thr-594) is a Phosphothreonine. Phosphoserine is present on Ser-598.

It belongs to the sodium:neurotransmitter symporter (SNF) (TC 2.A.22) family. SLC6A13 subfamily.

The protein localises to the cell membrane. The protein resides in the basolateral cell membrane. The catalysed reaction is 4-aminobutanoate(out) + chloride(out) + 2 Na(+)(out) = 4-aminobutanoate(in) + chloride(in) + 2 Na(+)(in). It carries out the reaction taurine(out) + chloride(out) + 2 Na(+)(out) = taurine(in) + chloride(in) + 2 Na(+)(in). The enzyme catalyses beta-alanine(out) + chloride(out) + 2 Na(+)(out) = beta-alanine(in) + chloride(in) + 2 Na(+)(in). It catalyses the reaction hypotaurine(out) + chloride(out) + 2 Na(+)(out) = hypotaurine(in) + chloride(in) + 2 Na(+)(in). Its function is as follows. Mediates sodium- and chloride-dependent transport of gamma-aminobutyric acid (GABA). Can also mediate transport of beta-alanine, taurine and hypotaurine. The protein is Sodium- and chloride-dependent GABA transporter 2 (SLC6A13) of Macaca fascicularis (Crab-eating macaque).